Consider the following 129-residue polypeptide: Vacuolar transporter chaperone complex subunit 1 (129 aa).

Serine 2 bears the N-acetylserine mark. Over 2-32 (SSAPLLQRTPGKKIALPTRVEPKVFFANERT) the chain is Cytoplasmic. A helical transmembrane segment spans residues 33-53 (FLSWLNFTVMLGGLGVGLLNF). Residues 54 to 59 (GDKIGR) are Vacuolar-facing. The helical transmembrane segment at 60-80 (VSAGLFTFVAMGTMIYALVTY) threads the bilayer. Over 81-98 (HWRAAAIRRRGSGPYDDR) the chain is Cytoplasmic. A helical membrane pass occupies residues 99 to 119 (LGPTLLCFFLLVAVIINFILR). Topologically, residues 120 to 129 (LKYNDANTKL) are vacuolar.

This sequence belongs to the VTC1 family. The VTC core complex is an integral membrane heterooligomer composed of the catalytic subunit VTC4 and the accessory subunits VTC1, VTC2 and VTC3. The complex exists in 2 different sub-complexes: VTC1-VTC2-VCT4 and VCT1-VTC3-VTC4. The VCT1-VTC3-VTC4 subcomplex is mostly found on the vacuolar membrane. The VTC1-VTC2-VCT4 subcomplex is observed in the cell periphery, probably ER and nuclear envelope, but localizes to the vacuole under phosphate starvation. Each subunit contains 3 transmembrane helices. VTC1 is a small membrane protein without hydrophilic domain. VTC2, VTC3 and VTC4 are related and have 2 hydrophilic domains that face the cytosol, an N-terminal SPX domain and the central core domain. The central core in VTC4 is the catalytic domain, with the essential catalytic lysine replaced by isoleucine and leucine in VTC2 and VTC3, respectively. The core complex associates with the accessory subunit VTC5. The complex interacts with the v-SNARE NYV1 and with the V(0) subunit of V-ATPase VPH1.

It localises to the vacuole membrane. It is found in the cytoplasm. Its subcellular location is the cell cortex. The protein resides in the endoplasmic reticulum membrane. The protein localises to the cytoplasmic vesicle. It localises to the autophagosome membrane. In terms of biological role, accessory subunit of the vacuolar transporter chaperone (VTC) complex. The VTC complex acts as a vacuolar polyphosphate polymerase that catalyzes the synthesis of inorganic polyphosphate (polyP) via transfer of phosphate from ATP to a growing polyP chain, releasing ADP. VTC exposes its catalytic domain VTC4 to the cytosol, where the growing polyP chain winds through a tunnel-shaped pocket, integrating cytoplasmic polymer synthesis with polyP membrane translocation. The VTC complex carries 9 vacuolar transmembrane domains, which are likely to constitute the translocation channel into the organelle lumen. PolyP synthesis is tightly coupled to its transport into the vacuole lumen, in order to avoid otherwise toxic intermediates in the cytosol, and it depends on the proton gradient across the membrane, formed by V-ATPase. VTC1 contributes only 3 transmembrane domains to the complex. The VTC complex also plays a role in vacuolar membrane fusion. Required for SEC18/NSF activity in SNARE priming, membrane binding of LMA1 and V(0) trans-complex formation. The sequence is that of Vacuolar transporter chaperone complex subunit 1 from Saccharomyces cerevisiae (strain ATCC 204508 / S288c) (Baker's yeast).